A 211-amino-acid chain; its full sequence is Large ribosomal subunit protein uL3 (211 aa).

Positions 122–156 are disordered; sequence NQKRNNFGRGPMSHGSKNHRAPGSIGAGTTPGRVY.

The protein belongs to the universal ribosomal protein uL3 family. As to quaternary structure, part of the 50S ribosomal subunit. Forms a cluster with proteins L14 and L19.

Its function is as follows. One of the primary rRNA binding proteins, it binds directly near the 3'-end of the 23S rRNA, where it nucleates assembly of the 50S subunit. The sequence is that of Large ribosomal subunit protein uL3 from Nostoc sp. (strain PCC 7120 / SAG 25.82 / UTEX 2576).